The following is a 323-amino-acid chain: tRNA U34 carboxymethyltransferase (323 aa).

Carboxy-S-adenosyl-L-methionine-binding positions include Lys-91, Trp-105, Lys-110, Gly-130, 152-154 (DPT), 181-182 (IE), Met-196, Tyr-200, and Arg-315.

Belongs to the class I-like SAM-binding methyltransferase superfamily. CmoB family. In terms of assembly, homotetramer.

The catalysed reaction is carboxy-S-adenosyl-L-methionine + 5-hydroxyuridine(34) in tRNA = 5-carboxymethoxyuridine(34) in tRNA + S-adenosyl-L-homocysteine + H(+). In terms of biological role, catalyzes carboxymethyl transfer from carboxy-S-adenosyl-L-methionine (Cx-SAM) to 5-hydroxyuridine (ho5U) to form 5-carboxymethoxyuridine (cmo5U) at position 34 in tRNAs. This chain is tRNA U34 carboxymethyltransferase, found in Salmonella paratyphi B (strain ATCC BAA-1250 / SPB7).